The primary structure comprises 269 residues: Formamidopyrimidine-DNA glycosylase (269 aa).

Residue Pro2 is the Schiff-base intermediate with DNA of the active site. Glu3 acts as the Proton donor in catalysis. Lys57 serves as the catalytic Proton donor; for beta-elimination activity. His90, Arg109, and Lys150 together coordinate DNA. The segment at 235–269 (QVYGRKGEPCRVCGTPIVATKHAQRATFYCRHCQK) adopts an FPG-type zinc-finger fold. The active-site Proton donor; for delta-elimination activity is the Arg259.

Belongs to the FPG family. Monomer. The cofactor is Zn(2+).

It catalyses the reaction Hydrolysis of DNA containing ring-opened 7-methylguanine residues, releasing 2,6-diamino-4-hydroxy-5-(N-methyl)formamidopyrimidine.. It carries out the reaction 2'-deoxyribonucleotide-(2'-deoxyribose 5'-phosphate)-2'-deoxyribonucleotide-DNA = a 3'-end 2'-deoxyribonucleotide-(2,3-dehydro-2,3-deoxyribose 5'-phosphate)-DNA + a 5'-end 5'-phospho-2'-deoxyribonucleoside-DNA + H(+). Functionally, involved in base excision repair of DNA damaged by oxidation or by mutagenic agents. Acts as a DNA glycosylase that recognizes and removes damaged bases. Has a preference for oxidized purines, such as 7,8-dihydro-8-oxoguanine (8-oxoG). Has AP (apurinic/apyrimidinic) lyase activity and introduces nicks in the DNA strand. Cleaves the DNA backbone by beta-delta elimination to generate a single-strand break at the site of the removed base with both 3'- and 5'-phosphates. In Salmonella agona (strain SL483), this protein is Formamidopyrimidine-DNA glycosylase.